The sequence spans 914 residues: Zinc finger protein 717 (914 aa).

The KRAB domain occupies 22 to 93 (VSFEEVAVHF…EETPNLRLSA (72 aa)). The C2H2-type 1; degenerate zinc finger occupies 209–231 (FQCNEQGKTFNTEAMFFIHKRVH). A C2H2-type 2; degenerate zinc finger spans residues 266 to 277 (RKSDFTKHQQTH). The segment at 283–305 (YECVECEKPSISKSDLMLQCKMP) adopts a C2H2-type 3; degenerate zinc-finger fold. 12 consecutive C2H2-type zinc fingers follow at residues 311-333 (YACN…QRIH), 339-361 (YGCN…ERTH), 367-389 (YKCI…HRTH), 395-417 (YQCS…HRTH), 423-445 (YACD…QRTH), 451-473 (YECN…QRTH), 479-501 (YECN…QWTH), 507-529 (YECN…QRTH), 535-557 (YACN…HRTH), 563-585 (YECN…QRTH), 591-613 (YECN…KRTH), and 619-641 (YECN…QGTH). The segment at 649-669 (CNECGKTFHRKSFLTIHQRTH) adopts a C2H2-type 16; degenerate zinc-finger fold. The segment at 741–752 (QKSVLTVHHRTH) adopts a C2H2-type 17; degenerate zinc-finger fold. C2H2-type zinc fingers lie at residues 758–780 (YECN…QGTH), 786–808 (YECD…QRTH), 814–836 (FECK…HRTH), 842–864 (FRCN…QRTH), and 870–892 (YECK…QQTH).

It belongs to the krueppel C2H2-type zinc-finger protein family.

Its subcellular location is the nucleus. May be involved in transcriptional regulation. In Homo sapiens (Human), this protein is Zinc finger protein 717.